The sequence spans 126 residues: Small ribosomal subunit protein uS12 (126 aa).

A 3-methylthioaspartic acid modification is found at D89. The disordered stretch occupies residues 99–126; that stretch reads RGSLDTSGVNDRKQGRSKYGTKKPKDKK. A compositionally biased stretch (basic residues) spans 113–126; the sequence is GRSKYGTKKPKDKK.

It belongs to the universal ribosomal protein uS12 family. In terms of assembly, part of the 30S ribosomal subunit. Contacts proteins S8 and S17. May interact with IF1 in the 30S initiation complex.

In terms of biological role, with S4 and S5 plays an important role in translational accuracy. Its function is as follows. Interacts with and stabilizes bases of the 16S rRNA that are involved in tRNA selection in the A site and with the mRNA backbone. Located at the interface of the 30S and 50S subunits, it traverses the body of the 30S subunit contacting proteins on the other side and probably holding the rRNA structure together. The combined cluster of proteins S8, S12 and S17 appears to hold together the shoulder and platform of the 30S subunit. This Legionella pneumophila (strain Paris) protein is Small ribosomal subunit protein uS12.